The primary structure comprises 207 residues: Testis-expressed protein 35 (207 aa).

Positions 43-79 (RKGMTRELKNELREVREQLTEKMEEIKQIKDIMDKDF) form a coiled coil.

Testis-specific. Expressed during spermatogenesis.

Its subcellular location is the nucleus. This is Testis-expressed protein 35 (Tex35) from Mus musculus (Mouse).